Here is a 463-residue protein sequence, read N- to C-terminus: tRNA (guanine(10)-N(2))-methyltransferase TRMT11 (463 aa).

An N-acetylalanine modification is found at alanine 2.

It belongs to the class I-like SAM-binding methyltransferase superfamily. TRM11 methyltransferase family. In terms of assembly, part of the heterodimeric TRMT11-TRM112 methyltransferase complex; this complex forms an active tRNA methyltransferase, where TRMT112 acts as an activator of the catalytic subunit TRMT11.

The protein resides in the cytoplasm. The catalysed reaction is guanosine(10) in tRNA + S-adenosyl-L-methionine = N(2)-methylguanosine(10) in tRNA + S-adenosyl-L-homocysteine + H(+). In terms of biological role, catalytic subunit of the TRMT11-TRM112 methyltransferase complex, that specifically mediates the S-adenosyl-L-methionine-dependent N(2)-methylation of guanosine nucleotide at position 10 (m2G10) in tRNAs. This is one of the major tRNA (guanine-N(2))-methyltransferases. In Homo sapiens (Human), this protein is tRNA (guanine(10)-N(2))-methyltransferase TRMT11.